A 426-amino-acid chain; its full sequence is Dihydropyrimidine dehydrogenase (NADP(+)), chloroplastic (426 aa).

The transit peptide at 1-44 (MASMSFALNRFSGLSSKTTLSADFDPSSRRSFLPPTRVGLKISS) directs the protein to the chloroplast. An N-acetylalanine modification is found at Ala-45. Residues Asn-129 and 188–190 (NFS) each bind substrate. The active-site Nucleophile is Cys-191. 256 to 257 (NT) serves as a coordination point for substrate. Residues 395 to 414 (VEQRKAEKRGLKSDKDWTGD) form a disordered region.

The protein belongs to the dihydropyrimidine dehydrogenase family. In terms of tissue distribution, expressed in roots, leaves, stems, siliques and flowers. Highly expressed ion dry seeds.

It localises to the plastid. The protein localises to the chloroplast. The catalysed reaction is 5,6-dihydrouracil + NADP(+) = uracil + NADPH + H(+). It functions in the pathway amino-acid biosynthesis; beta-alanine biosynthesis. Its function is as follows. Involved in pyrimidine base degradation. Catalyzes the reduction of uracil to 5,6-dihydrouracil (DHU) by using NADH as a specific cosubstrate and the reduction of thymine to 5,6-dihydrothymine (DHT). Involved in the recycling of nitrogen from nucleobases to general nitrogen metabolism. The polypeptide is Dihydropyrimidine dehydrogenase (NADP(+)), chloroplastic (Arabidopsis thaliana (Mouse-ear cress)).